Reading from the N-terminus, the 471-residue chain is ATP synthase subunit beta (471 aa).

154–161 (GGAGVGKT) contributes to the ATP binding site.

This sequence belongs to the ATPase alpha/beta chains family. F-type ATPases have 2 components, CF(1) - the catalytic core - and CF(0) - the membrane proton channel. CF(1) has five subunits: alpha(3), beta(3), gamma(1), delta(1), epsilon(1). CF(0) has three main subunits: a(1), b(2) and c(9-12). The alpha and beta chains form an alternating ring which encloses part of the gamma chain. CF(1) is attached to CF(0) by a central stalk formed by the gamma and epsilon chains, while a peripheral stalk is formed by the delta and b chains.

The protein localises to the cell membrane. It catalyses the reaction ATP + H2O + 4 H(+)(in) = ADP + phosphate + 5 H(+)(out). Its function is as follows. Produces ATP from ADP in the presence of a proton gradient across the membrane. The catalytic sites are hosted primarily by the beta subunits. The sequence is that of ATP synthase subunit beta from Mesomycoplasma hyopneumoniae (strain J / ATCC 25934 / NCTC 10110) (Mycoplasma hyopneumoniae).